A 67-amino-acid chain; its full sequence is Conotoxin Lt5.9 (67 aa).

A signal peptide spans 1–19; it reads MLCLPVFIILLLLASPAAP. Positions 20–46 are excised as a propeptide; it reads KSFETKVQSDLTRTDGNMETEENLGEV.

It belongs to the conotoxin T superfamily. Contains 2 disulfide bonds that can be either 'C1-C3, C2-C4' or 'C1-C4, C2-C3', since these disulfide connectivities have been observed for conotoxins with cysteine framework V (for examples, see AC P0DQQ7 and AC P81755). Expressed by the venom duct.

It localises to the secreted. The chain is Conotoxin Lt5.9 from Conus litteratus (Lettered cone).